A 158-amino-acid polypeptide reads, in one-letter code: Inorganic pyrophosphatase (158 aa).

Glu8 is a Mg(2+) binding site. The substrate site is built by Lys16, Arg30, and Tyr42. Residues Asp52, Asp57, Asp84, and Asp89 each contribute to the Mg(2+) site. The Proton acceptor role is filled by Asp89. Substrate is bound at residue Tyr125.

This sequence belongs to the PPase family. In terms of assembly, homohexamer. Mg(2+) serves as cofactor.

It is found in the cytoplasm. It catalyses the reaction diphosphate + H2O = 2 phosphate + H(+). Its function is as follows. Catalyzes the hydrolysis of inorganic pyrophosphate (PPi) forming two phosphate ions. The protein is Inorganic pyrophosphatase of Corynebacterium glutamicum (strain ATCC 13032 / DSM 20300 / JCM 1318 / BCRC 11384 / CCUG 27702 / LMG 3730 / NBRC 12168 / NCIMB 10025 / NRRL B-2784 / 534).